The sequence spans 245 residues: High affinity immunoglobulin epsilon receptor subunit alpha (245 aa).

Positions 1–23 (MDTGGSARLCLALVLISLGVMLT) are cleaved as a signal peptide. The Extracellular segment spans residues 24–204 (ATQKSVVSLD…DYTIEYRWLQ (181 aa)). Ig-like domains follow at residues 28–103 (SVVS…KPVY) and 113–181 (LQSS…LNKV). Cysteines 49 and 91 form a disulfide. Asn52, Asn53, Asn58, Asn65, Asn123, Asn158, and Asn167 each carry an N-linked (GlcNAc...) asparagine glycan. A disulfide bond links Cys130 and Cys174. Residues 205–223 (LIFPSLAVILFAVDTGLWF) traverse the membrane as a helical segment. Over 224–245 (STHKQFESILKIQKTGKGKKKG) the chain is Cytoplasmic.

In terms of assembly, tetramer of an alpha chain, a beta chain, and two disulfide linked gamma chains. Interacts with IGHE (via CH3 region). In terms of tissue distribution, expressed in leukocytes and pinealocytes at night (at protein level).

It localises to the cell membrane. Its subcellular location is the secreted. In terms of biological role, high-affinity receptor for immunoglobulin epsilon/IgE. Mediates IgE effector functions in myeloid cells. Upon IgE binding and antigen/allergen cross-linking initiates signaling pathways that lead to myeloid cell activation and differentiation. On mast cells, basophils and eosinophils stimulates the secretion of vasoactive amines, lipid mediators and cytokines that contribute to inflammatory response, tissue remodeling and cytotoxicity against microbes. Triggers the immediate hypersensitivity response to allergens as a host defense mechanism against helminth parasites, pathogenic bacteria and venom toxicity. When dysregulated, it can elicit harmful life-threatening allergic and anaphylactic reactions. This Rattus norvegicus (Rat) protein is High affinity immunoglobulin epsilon receptor subunit alpha (Fcer1a).